The sequence spans 422 residues: UDP-N-acetylglucosamine 1-carboxyvinyltransferase (422 aa).

23-24 (KN) contributes to the phosphoenolpyruvate binding site. Arg-92 is a binding site for UDP-N-acetyl-alpha-D-glucosamine. Cys-116 serves as the catalytic Proton donor. At Cys-116 the chain carries 2-(S-cysteinyl)pyruvic acid O-phosphothioketal. Residues 121–125 (RPVDL), 161–164 (KVSV), Asp-306, and Ile-328 contribute to the UDP-N-acetyl-alpha-D-glucosamine site.

Belongs to the EPSP synthase family. MurA subfamily.

The protein localises to the cytoplasm. It carries out the reaction phosphoenolpyruvate + UDP-N-acetyl-alpha-D-glucosamine = UDP-N-acetyl-3-O-(1-carboxyvinyl)-alpha-D-glucosamine + phosphate. Its pathway is cell wall biogenesis; peptidoglycan biosynthesis. Functionally, cell wall formation. Adds enolpyruvyl to UDP-N-acetylglucosamine. This chain is UDP-N-acetylglucosamine 1-carboxyvinyltransferase, found in Aliivibrio fischeri (strain ATCC 700601 / ES114) (Vibrio fischeri).